Reading from the N-terminus, the 371-residue chain is Queuine tRNA-ribosyltransferase (371 aa).

Residue Asp-90 is the Proton acceptor of the active site. Substrate is bound by residues 90 to 94 (DSGGF), Asp-144, Gln-188, and Gly-215. Residues 246–252 (GVGTPED) are RNA binding. Catalysis depends on Asp-265, which acts as the Nucleophile. The interval 270–274 (TRNAR) is RNA binding; important for wobble base 34 recognition. Cys-303, Cys-305, Cys-308, and His-334 together coordinate Zn(2+).

Belongs to the queuine tRNA-ribosyltransferase family. Homodimer. Within each dimer, one monomer is responsible for RNA recognition and catalysis, while the other monomer binds to the replacement base PreQ1. It depends on Zn(2+) as a cofactor.

It carries out the reaction 7-aminomethyl-7-carbaguanine + guanosine(34) in tRNA = 7-aminomethyl-7-carbaguanosine(34) in tRNA + guanine. It participates in tRNA modification; tRNA-queuosine biosynthesis. Functionally, catalyzes the base-exchange of a guanine (G) residue with the queuine precursor 7-aminomethyl-7-deazaguanine (PreQ1) at position 34 (anticodon wobble position) in tRNAs with GU(N) anticodons (tRNA-Asp, -Asn, -His and -Tyr). Catalysis occurs through a double-displacement mechanism. The nucleophile active site attacks the C1' of nucleotide 34 to detach the guanine base from the RNA, forming a covalent enzyme-RNA intermediate. The proton acceptor active site deprotonates the incoming PreQ1, allowing a nucleophilic attack on the C1' of the ribose to form the product. After dissociation, two additional enzymatic reactions on the tRNA convert PreQ1 to queuine (Q), resulting in the hypermodified nucleoside queuosine (7-(((4,5-cis-dihydroxy-2-cyclopenten-1-yl)amino)methyl)-7-deazaguanosine). The sequence is that of Queuine tRNA-ribosyltransferase from Neisseria meningitidis serogroup C (strain 053442).